Consider the following 199-residue polypeptide: Ribonuclease HII (199 aa).

The RNase H type-2 domain maps to 11 to 199 (SRVAGVDEVG…RRSFLRRLLG (189 aa)). Positions 17, 18, and 113 each coordinate a divalent metal cation.

This sequence belongs to the RNase HII family. The cofactor is Mn(2+). It depends on Mg(2+) as a cofactor.

The protein resides in the cytoplasm. The catalysed reaction is Endonucleolytic cleavage to 5'-phosphomonoester.. Functionally, endonuclease that specifically degrades the RNA of RNA-DNA hybrids. The polypeptide is Ribonuclease HII (Synechococcus sp. (strain CC9902)).